We begin with the raw amino-acid sequence, 203 residues long: MRLTRDFYAKDARVLAKELLGKVLVREVDGIKLKGKIVETEAYIGAIDKASHAYGGRRTKRTEPLYGKPGIAYVYFIYGKYFCFNIISKTEGEAEGVLIRALEPLENINLISKLRFNKEFEELNNYQRKNITSGPSKLCMAFNINRDNNWEDLCESSSLYVEDVFYNDFEIIETVRVGIDYAEEARDFLWRYYIKDNAFVSVK.

The protein belongs to the DNA glycosylase MPG family.

This chain is Putative 3-methyladenine DNA glycosylase, found in Clostridium botulinum (strain ATCC 19397 / Type A).